The following is a 92-amino-acid chain: Small ribosomal subunit protein uS19 (92 aa).

The protein belongs to the universal ribosomal protein uS19 family.

In terms of biological role, protein S19 forms a complex with S13 that binds strongly to the 16S ribosomal RNA. The chain is Small ribosomal subunit protein uS19 from Methylocella silvestris (strain DSM 15510 / CIP 108128 / LMG 27833 / NCIMB 13906 / BL2).